Consider the following 209-residue polypeptide: Type III pantothenate kinase (209 aa).

Aspartate 5–asparagine 12 provides a ligand contact to ATP. Substrate contacts are provided by residues tyrosine 68 and glycine 72–arginine 75. Residue aspartate 74 is the Proton acceptor of the active site. Aspartate 89 contributes to the K(+) binding site. Residue serine 92 participates in ATP binding. Threonine 144 lines the substrate pocket.

It belongs to the type III pantothenate kinase family. In terms of assembly, homodimer. It depends on NH4(+) as a cofactor. K(+) is required as a cofactor.

The protein resides in the cytoplasm. The catalysed reaction is (R)-pantothenate + ATP = (R)-4'-phosphopantothenate + ADP + H(+). It functions in the pathway cofactor biosynthesis; coenzyme A biosynthesis; CoA from (R)-pantothenate: step 1/5. Functionally, catalyzes the phosphorylation of pantothenate (Pan), the first step in CoA biosynthesis. The chain is Type III pantothenate kinase from Campylobacter jejuni subsp. jejuni serotype O:2 (strain ATCC 700819 / NCTC 11168).